Consider the following 490-residue polypeptide: Tektin-3 (490 aa).

Residues Thr-7 and Thr-9 are each glycosylated (O-linked (GalNAc...) threonine). N-linked (GlcNAc...) asparagine glycans are attached at residues Asn-41, Asn-86, Asn-111, and Asn-276. Positions 419–456 (RLVNEVYEVDETIQTLQQRLRDSEDTLQSLAHTKATLE) form a coiled coil.

This sequence belongs to the tektin family. As to quaternary structure, microtubule inner protein component of sperm flagellar doublet microtubules. Interacts with TEKT1, TEKT2, TEKT4 and TEKT5. Interacts with CCDC38. In terms of processing, N- and O-glycosylated. Post-translationally, may be proteolytically processed during the epididymal transit of spermatozoa. Ubiquitinated, leading to its degradation. Deubiquitinated by USP16, promoting its stability. Expressed in epididymal sperm (at protein level).

Its subcellular location is the cytoplasm. It is found in the cytoskeleton. The protein localises to the cilium axoneme. It localises to the flagellum axoneme. The protein resides in the cytoplasmic vesicle. Its subcellular location is the secretory vesicle. It is found in the acrosome outer membrane. In terms of biological role, microtubule inner protein (MIP) part of the dynein-decorated doublet microtubules (DMTs) in cilia and flagellar axoneme. Forms filamentous polymers in the walls of ciliary and flagellar microtubules. Required for normal sperm mobility. The protein is Tektin-3 (Tekt3) of Rattus norvegicus (Rat).